The chain runs to 157 residues: Transcriptional repressor NrdR (157 aa).

The segment at 3–34 (CPSCQNTDSRVLESRSADAGKCVRRRRECLNC) is a zinc-finger region. The region spanning 49–139 (VTVIKRSNAK…VYRQFNGIED (91 aa)) is the ATP-cone domain.

It belongs to the NrdR family. Zn(2+) is required as a cofactor.

Its function is as follows. Negatively regulates transcription of bacterial ribonucleotide reductase nrd genes and operons by binding to NrdR-boxes. This is Transcriptional repressor NrdR from Prochlorococcus marinus (strain SARG / CCMP1375 / SS120).